Consider the following 185-residue polypeptide: Elongation factor P (185 aa).

The protein belongs to the elongation factor P family.

The protein resides in the cytoplasm. The protein operates within protein biosynthesis; polypeptide chain elongation. Its function is as follows. Involved in peptide bond synthesis. Stimulates efficient translation and peptide-bond synthesis on native or reconstituted 70S ribosomes in vitro. Probably functions indirectly by altering the affinity of the ribosome for aminoacyl-tRNA, thus increasing their reactivity as acceptors for peptidyl transferase. This Streptococcus equi subsp. zooepidemicus (strain MGCS10565) protein is Elongation factor P.